A 289-amino-acid polypeptide reads, in one-letter code: Urease accessory protein UreD (289 aa).

Belongs to the UreD family. UreD, UreF and UreG form a complex that acts as a GTP-hydrolysis-dependent molecular chaperone, activating the urease apoprotein by helping to assemble the nickel containing metallocenter of UreC. The UreE protein probably delivers the nickel.

It is found in the cytoplasm. In terms of biological role, required for maturation of urease via the functional incorporation of the urease nickel metallocenter. This is Urease accessory protein UreD from Xanthobacter autotrophicus (strain ATCC BAA-1158 / Py2).